Reading from the N-terminus, the 127-residue chain is Fumarate reductase subunit C (127 aa).

A run of 3 helical transmembrane segments spans residues 30–50 (ATILPLIFFTICLLVGLGSLV), 67–87 (IVVALNIVALAGSLFHAQTFF), and 107–127 (VVVLAQWAAVAAITLLVLVIV).

It belongs to the FrdC family. Part of an enzyme complex containing four subunits: a flavoprotein (FrdA), an iron-sulfur protein (FrdB), and two hydrophobic anchor proteins (FrdC and FrdD).

It is found in the cell inner membrane. Its function is as follows. Anchors the catalytic components of the fumarate reductase complex to the cell membrane, binds quinones. This chain is Fumarate reductase subunit C, found in Aliivibrio salmonicida (strain LFI1238) (Vibrio salmonicida (strain LFI1238)).